The following is a 190-amino-acid chain: Homeobox protein SEBOX (190 aa).

Residues 1-11 are compositionally biased toward low complexity; it reads MPSPVDASSAD. 2 disordered regions span residues 1–24 and 82–161; these read MPSPVDASSADGGSGLGSHRRKRT and ILSP…VHPS. The homeobox DNA-binding region spans 19 to 78; sequence HRRKRTTFSKGQLLELERAFAAWPYPNISTHEHLAWVTCLPEAKVQVWFQKRWAKIIKNR. Residues 89–100 show a composition bias toward polar residues; that stretch reads CPQSSCSLPDTL.

The protein belongs to the paired homeobox family.

The protein localises to the nucleus. In terms of biological role, probable transcription factor involved in the control of specification of mesoderm and endoderm. In Homo sapiens (Human), this protein is Homeobox protein SEBOX (SEBOX).